The sequence spans 270 residues: MAEASNEPYRPLTVDVDRWAAAATPEIAHQLFEIVDIVDANGALRRALTDPSRSGEDRARLVHTLLDGRANEVAVDIVAELASQRSATERQLGDGIERTAVLVAAAAAENRGGGHALEALVDDLIRFKSMLDRSADVQRAFSDSRASAEAKVTLARRLAHTESDEAALLIERAVSAPRGSLPGRLLEQFAQWVADRQQRWIARVETARPLGEEQLARLQDGLNRLYGRDLKLTTETNPSLVGGLRVQVGEEIIDGSLTHRLGQLQQRIGA.

It belongs to the ATPase delta chain family. As to quaternary structure, F-type ATPases have 2 components, F(1) - the catalytic core - and F(0) - the membrane proton channel. F(1) has five subunits: alpha(3), beta(3), gamma(1), delta(1), epsilon(1). F(0) has three main subunits: a(1), b(2) and c(10-14). The alpha and beta chains form an alternating ring which encloses part of the gamma chain. F(1) is attached to F(0) by a central stalk formed by the gamma and epsilon chains, while a peripheral stalk is formed by the delta and b chains.

Its subcellular location is the cell membrane. Functionally, f(1)F(0) ATP synthase produces ATP from ADP in the presence of a proton or sodium gradient. F-type ATPases consist of two structural domains, F(1) containing the extramembraneous catalytic core and F(0) containing the membrane proton channel, linked together by a central stalk and a peripheral stalk. During catalysis, ATP synthesis in the catalytic domain of F(1) is coupled via a rotary mechanism of the central stalk subunits to proton translocation. Its function is as follows. This protein is part of the stalk that links CF(0) to CF(1). It either transmits conformational changes from CF(0) to CF(1) or is implicated in proton conduction. In Kocuria rhizophila (strain ATCC 9341 / DSM 348 / NBRC 103217 / DC2201), this protein is ATP synthase subunit delta.